We begin with the raw amino-acid sequence, 126 residues long: Urease subunit beta (126 aa).

This sequence belongs to the urease beta subunit family. In terms of assembly, heterotrimer of UreA (gamma), UreB (beta) and UreC (alpha) subunits. Three heterotrimers associate to form the active enzyme.

The protein localises to the cytoplasm. It catalyses the reaction urea + 2 H2O + H(+) = hydrogencarbonate + 2 NH4(+). It functions in the pathway nitrogen metabolism; urea degradation; CO(2) and NH(3) from urea (urease route): step 1/1. This Gloeothece citriformis (strain PCC 7424) (Cyanothece sp. (strain PCC 7424)) protein is Urease subunit beta.